Reading from the N-terminus, the 1742-residue chain is NACHT and WD repeat domain-containing protein 2 (1742 aa).

LRR repeat units follow at residues Phe-386–Asn-410, Leu-677–Ser-698, Val-724–Gln-747, Tyr-883–Phe-906, and Leu-925–Asp-953. Residues Asn-410 to Leu-737 enclose the NACHT domain. WD repeat units follow at residues Leu-963–Gln-1004, Thr-1007–Glu-1046, Phe-1140–Leu-1179, Arg-1229–Gln-1271, Glu-1272–Asn-1311, Lys-1314–Val-1353, Lys-1355–Arg-1394, Asn-1396–Asn-1434, Glu-1476–Arg-1516, Asn-1522–Val-1561, and Ser-1614–Leu-1653. A disordered region spans residues Pro-1702–Asn-1721. Residues Ile-1703 to Thr-1715 are compositionally biased toward polar residues.

The protein is NACHT and WD repeat domain-containing protein 2 (Nwd2) of Mus musculus (Mouse).